Reading from the N-terminus, the 253-residue chain is MFEDLKPHLQELRKRLMVSVGTILVAFLGCFHFWKSIFEFVKNSYKGTLIQLSPIEGVMVAVKISFSAAIVISMPIIFWQLWLFIAPGLYKNEKKVILPFVFFGSGMFLIGAAFSYYVVFPFIIEYLATFGSDVFAANISASSYVSFFTRLILGFGVAFELPVLAYFLAKVGLITDASLKAYFKYAIVVIFIVAAIITPPDVVSQIFMALPLVGLYGLSILIAKMVNPAPKDNENNNENNNENNTKENTKSES.

Transmembrane regions (helical) follow at residues 18-38 (VSVG…KSIF), 69-89 (AIVI…APGL), 96-116 (VILP…AFSY), 151-171 (LILG…LAKV), 187-207 (IVVI…SQIF), and 208-228 (MALP…MVNP). A disordered region spans residues 231–253 (KDNENNNENNNENNTKENTKSES). Residues 244-253 (NTKENTKSES) are compositionally biased toward basic and acidic residues.

The protein belongs to the TatC family. As to quaternary structure, the Tat system comprises two distinct complexes: a TatABC complex, containing multiple copies of TatA, TatB and TatC subunits, and a separate TatA complex, containing only TatA subunits. Substrates initially bind to the TatABC complex, which probably triggers association of the separate TatA complex to form the active translocon.

The protein localises to the cell inner membrane. Functionally, part of the twin-arginine translocation (Tat) system that transports large folded proteins containing a characteristic twin-arginine motif in their signal peptide across membranes. Together with TatB, TatC is part of a receptor directly interacting with Tat signal peptides. The sequence is that of Sec-independent protein translocase protein TatC from Helicobacter pylori (strain ATCC 700392 / 26695) (Campylobacter pylori).